We begin with the raw amino-acid sequence, 545 residues long: Ribulokinase (545 aa).

The protein belongs to the ribulokinase family.

The enzyme catalyses D-ribulose + ATP = D-ribulose 5-phosphate + ADP + H(+). It catalyses the reaction L-ribulose + ATP = L-ribulose 5-phosphate + ADP + H(+). The protein operates within carbohydrate degradation; L-arabinose degradation via L-ribulose; D-xylulose 5-phosphate from L-arabinose (bacterial route): step 2/3. The chain is Ribulokinase from Staphylococcus aureus (strain USA300).